The primary structure comprises 141 residues: Transcription antitermination protein NusB (141 aa).

It belongs to the NusB family.

In terms of biological role, involved in transcription antitermination. Required for transcription of ribosomal RNA (rRNA) genes. Binds specifically to the boxA antiterminator sequence of the ribosomal RNA (rrn) operons. In Neisseria meningitidis serogroup C (strain 053442), this protein is Transcription antitermination protein NusB.